The sequence spans 273 residues: Putative expansin-B2 (273 aa).

The signal sequence occupies residues Met1 to Cys29. N-linked (GlcNAc...) asparagine glycosylation is present at Asn36. Residues Gly65–Lys173 enclose the Expansin-like EG45 domain. 3 disulfides stabilise this stretch: Cys68/Cys97, Cys100/Cys168, and Cys105/Cys111. In terms of domain architecture, Expansin-like CBD spans Asn186–Ser269.

This sequence belongs to the expansin family. Expansin B subfamily.

The protein resides in the secreted. The protein localises to the cell wall. It localises to the membrane. May cause loosening and extension of plant cell walls by disrupting non-covalent bonding between cellulose microfibrils and matrix glucans. No enzymatic activity has been found. This chain is Putative expansin-B2 (EXPB2), found in Arabidopsis thaliana (Mouse-ear cress).